The following is a 175-amino-acid chain: Bifunctional protein PyrR (175 aa).

Substrate contacts are provided by residues 40–41 (TR), 102–110 (DDVLYTGRT), R135, and V159. The PRPP-binding motif lies at 98 to 110 (VVIIDDVLYTGRT).

Belongs to the purine/pyrimidine phosphoribosyltransferase family. PyrR subfamily. As to quaternary structure, homodimer and homohexamer; in equilibrium.

It catalyses the reaction UMP + diphosphate = 5-phospho-alpha-D-ribose 1-diphosphate + uracil. In terms of biological role, regulates transcriptional attenuation of the pyrimidine nucleotide (pyr) operon by binding in a uridine-dependent manner to specific sites on pyr mRNA. This disrupts an antiterminator hairpin in the RNA and favors formation of a downstream transcription terminator, leading to a reduced expression of downstream genes. Also displays a weak uracil phosphoribosyltransferase activity which is not physiologically significant. The protein is Bifunctional protein PyrR of Staphylococcus epidermidis (strain ATCC 12228 / FDA PCI 1200).